We begin with the raw amino-acid sequence, 530 residues long: AarF domain-containing protein kinase 1 (530 aa).

In terms of domain architecture, Protein kinase spans 155 to 467; it reads SFDDTPLGTA…ASSFLNMSRC (313 aa). Residues 161–169 and lysine 183 contribute to the ATP site; that span reads LGTASLAQV. The Proton acceptor role is filled by aspartate 315.

It belongs to the protein kinase superfamily. ADCK protein kinase family.

It localises to the mitochondrion. In terms of biological role, appears to be essential for maintaining mitochondrial cristae formation and mitochondrial function by acting via YME1L1 in a kinase-independent manner to regulate essential mitochondrial structural proteins OPA1 and IMMT. The action of this enzyme is not yet clear. It is not known if it has protein kinase activity and what type of substrate it would phosphorylate (Ser, Thr or Tyr). This is AarF domain-containing protein kinase 1 from Homo sapiens (Human).